Here is a 124-residue protein sequence, read N- to C-terminus: Small ribosomal subunit protein uS12 (124 aa).

Residue aspartate 89 is modified to 3-methylthioaspartic acid.

This sequence belongs to the universal ribosomal protein uS12 family. In terms of assembly, part of the 30S ribosomal subunit. Contacts proteins S8 and S17. May interact with IF1 in the 30S initiation complex.

Functionally, with S4 and S5 plays an important role in translational accuracy. Its function is as follows. Interacts with and stabilizes bases of the 16S rRNA that are involved in tRNA selection in the A site and with the mRNA backbone. Located at the interface of the 30S and 50S subunits, it traverses the body of the 30S subunit contacting proteins on the other side and probably holding the rRNA structure together. The combined cluster of proteins S8, S12 and S17 appears to hold together the shoulder and platform of the 30S subunit. The sequence is that of Small ribosomal subunit protein uS12 (rpsL) from Mannheimia haemolytica (Pasteurella haemolytica).